Here is a 470-residue protein sequence, read N- to C-terminus: Box C/D snoRNA protein 1 (470 aa).

The interval 1 to 70 (MEFAAENEGK…EEGSGQRPEE (70 aa)) is disordered. At S25 the chain carries Phosphoserine. Residues 41–51 (EFGGGEEGTGL) show a composition bias toward gly residues. Residues K79, K108, K118, K138, K143, K153, K162, K173, K183, and K200 each participate in a glycyl lysine isopeptide (Lys-Gly) (interchain with G-Cter in SUMO2) cross-link. C220, C223, C232, C235, C240, C244, H248, and C254 together coordinate Zn(2+). The segment at 220–254 (CETCGTEEAKYRCPRCMRYSCSLPCVKKHKAELTC) adopts an HIT-type zinc-finger fold. K459 is covalently cross-linked (Glycyl lysine isopeptide (Lys-Gly) (interchain with G-Cter in SUMO2)).

It belongs to the BCD1 family. Interacts with FBL, SNU13, NOP58, NUFIP1, RUVBL1, RUVBL2 and TAF9. Interacts (via HIT-type zinc finger) with the RUVBL1/RUVBL2 complex in the presence of ADP.

In terms of biological role, required for box C/D snoRNAs accumulation involved in snoRNA processing, snoRNA transport to the nucleolus and ribosome biogenesis. The polypeptide is Box C/D snoRNA protein 1 (ZNHIT6) (Homo sapiens (Human)).